The sequence spans 111 residues: P antigen family member 2 (111 aa).

A disordered region spans residues 1 to 66; it reads MSELLRARSQ…NQAVPAFQGP (66 aa). A compositionally biased stretch (polar residues) spans 8–24; the sequence is RSQSSERGNDQESSQPV.

It belongs to the GAGE family.

The protein is P antigen family member 2 (PAGE2) of Homo sapiens (Human).